Reading from the N-terminus, the 167-residue chain is Thiol peroxidase (167 aa).

The Thioredoxin domain occupies 18–167 (VKVGDQAPDF…PIEAAKALVK (150 aa)). Cys-60 (cysteine sulfenic acid (-SOH) intermediate) is an active-site residue. An intrachain disulfide couples Cys-60 to Cys-94.

Belongs to the peroxiredoxin family. Tpx subfamily. Homodimer.

The enzyme catalyses a hydroperoxide + [thioredoxin]-dithiol = an alcohol + [thioredoxin]-disulfide + H2O. Thiol-specific peroxidase that catalyzes the reduction of hydrogen peroxide and organic hydroperoxides to water and alcohols, respectively. Plays a role in cell protection against oxidative stress by detoxifying peroxides. This chain is Thiol peroxidase, found in Bacillus subtilis (strain 168).